Reading from the N-terminus, the 331-residue chain is Beta-ketoacyl-[acyl-carrier-protein] synthase III (331 aa).

Catalysis depends on residues C113 and H256. The interval 257–261 (QANKR) is ACP-binding. N286 is a catalytic residue.

This sequence belongs to the thiolase-like superfamily. FabH family. In terms of assembly, homodimer.

The protein resides in the cytoplasm. It carries out the reaction malonyl-[ACP] + acetyl-CoA + H(+) = 3-oxobutanoyl-[ACP] + CO2 + CoA. It functions in the pathway lipid metabolism; fatty acid biosynthesis. In terms of biological role, catalyzes the condensation reaction of fatty acid synthesis by the addition to an acyl acceptor of two carbons from malonyl-ACP. Catalyzes the first condensation reaction which initiates fatty acid synthesis and may therefore play a role in governing the total rate of fatty acid production. Possesses both acetoacetyl-ACP synthase and acetyl transacylase activities. Its substrate specificity determines the biosynthesis of branched-chain and/or straight-chain of fatty acids. In Solibacter usitatus (strain Ellin6076), this protein is Beta-ketoacyl-[acyl-carrier-protein] synthase III.